The following is a 533-amino-acid chain: Beta-1,2-xylosyltransferase RCN11 (533 aa).

At 1 to 23 (MMPVRTYHHHHHHNNSNNHRLRR) the chain is on the cytoplasmic side. A helical; Signal-anchor for type II membrane protein membrane pass occupies residues 24 to 44 (IIPRVLLAVFAIYAVSFAAYL). Over 45-533 (LRHQSPHPHP…LSNILKGFGC (489 aa)) the chain is Lumenal. The disordered stretch occupies residues 51–78 (HPHPHPAADPERDAVDAAGGGGGGGAVD). Residues 56–65 (PAADPERDAV) show a composition bias toward basic and acidic residues. N-linked (GlcNAc...) asparagine glycans are attached at residues Asn307 and Asn313.

This sequence belongs to the glycosyltransferase 61 family. As to expression, expressed at the base of the crown roots and in the basal region of the shoot, which contains the shoot and axillary meristems.

Its subcellular location is the golgi apparatus membrane. It participates in glycan metabolism. Its function is as follows. Glycosyltransferase involved in the xylosylation of N-glycans. Possesses beta-1,2-xylosyltransferase activity, transferring xylose from UDP-xylose to the core beta-linked mannose of N-glycans. Beta-1,2-linked xylose residues on N-glycans are critical for seed germination and plant development and growth under conditions of abiotic stress. The sequence is that of Beta-1,2-xylosyltransferase RCN11 from Oryza sativa subsp. japonica (Rice).